Consider the following 547-residue polypeptide: uncharacterized protein (547 aa).

At M1–R19 the chain is on the cytoplasmic side. Residues P20–S40 traverse the membrane as a helical segment. Topologically, residues S41–T64 are vacuolar. The helical transmembrane segment at F65 to I85 threads the bilayer. Residues N86–F89 lie on the Cytoplasmic side of the membrane. Residues L90 to I110 traverse the membrane as a helical segment. The Vacuolar portion of the chain corresponds to G111–A139. A helical membrane pass occupies residues Y140–F160. At N161–Q340 the chain is on the cytoplasmic side. S225 is modified (phosphoserine). The segment at P237–D271 is disordered. The segment covering R242 to Q253 has biased composition (polar residues). Residues L341 to G361 traverse the membrane as a helical segment. Topologically, residues E362–N394 are vacuolar. Residues F395–Y415 traverse the membrane as a helical segment. Residues L416–S523 lie on the Cytoplasmic side of the membrane. A helical transmembrane segment spans residues F524 to T544. Topologically, residues V545–I547 are vacuolar.

It localises to the vacuole membrane. This is an uncharacterized protein from Saccharomyces cerevisiae (strain ATCC 204508 / S288c) (Baker's yeast).